Reading from the N-terminus, the 59-residue chain is Beta-defensin 134 (59 aa).

The N-terminal stretch at 1–19 is a signal peptide; the sequence is MKPLLVVFVFLFLWDPVLA. 3 disulfides stabilise this stretch: cysteine 25-cysteine 51, cysteine 31-cysteine 45, and cysteine 35-cysteine 52.

It belongs to the beta-defensin family.

Its subcellular location is the secreted. Has antibacterial activity. In Pan troglodytes (Chimpanzee), this protein is Beta-defensin 134 (DEFB134).